Here is a 394-residue protein sequence, read N- to C-terminus: MDRPPPDQQRQKQAPLFSPYQMPRFRLNHRVVLAPMTRCRAIGGVPGPALAEYYAQRTTQGGLLISEGTVVSPAGPGFPHVPGIYNQEQTDAWKKVVDAVHAKGGIFFCQLWHVGRASHQVYQPNGAAPISSTDKPISARWRILMPDGSYGKYPKPRRLAASEIPEIVEQYRQAAINAIEAGFDGIEIHGAHGYIIDQFLKDGINDRTDEYGGSLSNRCRFLLEVTRAVVSAIGADRVAVRISPAIDHLDAYDSDPIKLGMAVVERLNALQQQSGRLAYLHVTQPRYTAYGQTESGQHGSAEEESRLMRTLRGTYQGTFMCSGGYTRELGLEAVESGDADLVSYGRLFISNPDLVERFRLNAGLNKYVRKTFYTPDPVVGYTDYPFLGQPKSRM.

FMN contacts are provided by residues 35–37 and Gln110; that span reads PMT. 189–192 is a substrate binding site; that stretch reads HGAH. Tyr194 serves as the catalytic Proton donor. An FMN-binding site is contributed by Arg241. Arg286 lines the substrate pocket. Residues Gly324 and 345–346 contribute to the FMN site; that span reads GR. Positions 392–394 match the Microbody targeting signal motif; the sequence is SRM.

It belongs to the NADH:flavin oxidoreductase/NADH oxidase family. FMN is required as a cofactor.

It localises to the peroxisome. It carries out the reaction (1S,2S)-OPC-8 + NADP(+) = (9S,13S,15Z)-12-oxophyto-10,15-dienoate + NADPH + H(+). It participates in lipid metabolism; oxylipin biosynthesis. Functionally, involved in the biosynthesis of jasmonate (JA) and perhaps in biosynthesis or metabolism of other oxylipin signaling moleclules. In vitro, reduces cis(+)-12-oxophytodienoic acid (cis(+)-OPDA) and cis(-)-OPDA to cis(+)-OPC-8:0 and cis(-)-OPC-8:0, respectively. May be required for the spatial and temporal regulation of JA levels during dehiscence of anthers, promoting the stomium degeneration program. Involved in carbohydrate transport underlying normal lodicule function during anthesis. This chain is 12-oxophytodienoate reductase 7, found in Oryza sativa subsp. japonica (Rice).